We begin with the raw amino-acid sequence, 340 residues long: Phosphoribosylformylglycinamidine cyclo-ligase (340 aa).

This sequence belongs to the AIR synthase family.

The protein localises to the cytoplasm. The enzyme catalyses 2-formamido-N(1)-(5-O-phospho-beta-D-ribosyl)acetamidine + ATP = 5-amino-1-(5-phospho-beta-D-ribosyl)imidazole + ADP + phosphate + H(+). It participates in purine metabolism; IMP biosynthesis via de novo pathway; 5-amino-1-(5-phospho-D-ribosyl)imidazole from N(2)-formyl-N(1)-(5-phospho-D-ribosyl)glycinamide: step 2/2. This is Phosphoribosylformylglycinamidine cyclo-ligase from Streptococcus pneumoniae serotype 2 (strain D39 / NCTC 7466).